Reading from the N-terminus, the 1767-residue chain is Endo-alpha-N-acetylgalactosaminidase (1767 aa).

The first 39 residues, methionine 1–aspartate 39, serve as a signal peptide directing secretion. 2 stretches are compositionally biased toward basic and acidic residues: residues lysine 61–glutamate 75 and aspartate 84–alanine 111. 2 disordered regions span residues lysine 61–glutamate 124 and valine 301–valine 324. Residues alanine 112–glutamate 124 are compositionally biased toward low complexity. A compositionally biased stretch (basic and acidic residues) spans aspartate 304 to valine 324. Ca(2+) contacts are provided by aspartate 577, asparagine 579, aspartate 581, asparagine 583, and aspartate 588. A catalytic region spans residues glycine 602–phenylalanine 893. Substrate is bound at residue aspartate 658. The Nucleophile role is filled by aspartate 764. The Proton donor/acceptor role is filled by glutamate 796. Positions 1233, 1235, 1281, 1284, and 1411 each coordinate Ca(2+). The disordered stretch occupies residues leucine 1711 to threonine 1730. Basic and acidic residues predominate over residues lysine 1717–threonine 1730. The LPXTG sorting signal motif lies at leucine 1735 to glycine 1739. Threonine 1738 is subject to Pentaglycyl murein peptidoglycan amidated threonine. Positions glycine 1739–aspartate 1767 are cleaved as a propeptide — removed by sortase.

This sequence belongs to the glycosyl hydrolase 101 family. A subfamily.

The protein resides in the secreted. It is found in the cell wall. The enzyme catalyses a 3-O-[beta-D-galactosyl-(1-&gt;3)-N-acetyl-alpha-D-galactosaminyl]-L-threonyl-[protein] + H2O = beta-D-galactosyl-(1-&gt;3)-N-acetyl-D-galactosamine + L-threonyl-[protein]. The catalysed reaction is a 3-O-[beta-D-galactosyl-(1-&gt;3)-N-acetyl-alpha-D-galactosaminyl]-L-seryl-[protein] + H2O = beta-D-galactosyl-(1-&gt;3)-N-acetyl-D-galactosamine + L-seryl-[protein]. Functionally, involved in the breakdown of mucin-type O-linked glycans. Specifically removes the T-antigen disaccharide (Gal-beta-1,3-GalNAc-alpha) from extracellular host glycoproteins. Representative of a broadly important class of virulence factors. This is Endo-alpha-N-acetylgalactosaminidase from Streptococcus pneumoniae serotype 4 (strain ATCC BAA-334 / TIGR4).